Consider the following 330-residue polypeptide: RNA/RNP complex-1-interacting phosphatase (330 aa).

Basic residues predominate over residues Met-1–Gly-12. Residues Met-1–Pro-32 form a disordered region. In terms of domain architecture, Tyrosine-protein phosphatase spans Phe-61 to Trp-208. The active-site Phosphocysteine intermediate is the Cys-152. Substrate is bound at residue Thr-153–Arg-158. Arg-158 functions as the Proton donor/acceptor in the catalytic mechanism.

Belongs to the protein-tyrosine phosphatase family. Non-receptor class dual specificity subfamily. Monomer. May interact with SFRS7 and SFRS9/SRP30C.

The protein resides in the nucleus. Its subcellular location is the nucleus speckle. Functionally, possesses RNA 5'-triphosphatase and diphosphatase activities, but displays a poor protein-tyrosine phosphatase activity. In addition, has phosphatase activity with ATP, ADP and O-methylfluorescein phosphate (in vitro). Binds to RNA. May participate in nuclear mRNA metabolism. The sequence is that of RNA/RNP complex-1-interacting phosphatase from Homo sapiens (Human).